Reading from the N-terminus, the 219-residue chain is MCPARSLLLVATLVLLDYLSLARNLSVATPGPEMFPCLHHSQNLLKAASNTLQKARQILEFYPCTSEEIDHEDITKDKTSTVEACLPLELIKNESCLNSRETSFITNGSCLASRKTSFMMALCLRSIYEDLKMYQVEFKTMNAKLLRDPKRQIFLDQNILGVIDELMQALNFNSETVPQKSSLEEPDFYKTKIKLCILLHAFRIRAVTIDRVMSYLNAS.

An N-terminal signal peptide occupies residues 1-22 (MCPARSLLLVATLVLLDYLSLA). Asn-24, Asn-93, and Asn-107 each carry an N-linked (GlcNAc...) asparagine glycan. Intrachain disulfides connect Cys-37–Cys-110, Cys-64–Cys-196, and Cys-85–Cys-123.

Belongs to the IL-6 superfamily. In terms of assembly, heterodimer with IL12B; disulfide-linked. This heterodimer is known as interleukin IL-12. Heterodimer with EBI3/IL27B; not disulfide-linked. This heterodimer is known as interleukin IL-35. Interacts with NBR1; this interaction promotes IL-12 secretion.

It is found in the secreted. In terms of biological role, heterodimerizes with IL12B to form the IL-12 cytokine or with EBI3/IL27B to form the IL-35 cytokine. IL-12 is primarily produced by professional antigen-presenting cells (APCs) such as B-cells and dendritic cells (DCs) as well as macrophages and granulocytes and regulates T-cell and natural killer-cell responses, induces the production of interferon-gamma (IFN-gamma), favors the differentiation of T-helper 1 (Th1) cells and is an important link between innate resistance and adaptive immunity. Mechanistically, exerts its biological effects through a receptor composed of IL12R1 and IL12R2 subunits. Binding to the receptor results in the rapid tyrosine phosphorylation of a number of cellular substrates including the JAK family kinases TYK2 and JAK2. In turn, recruited STAT4 gets phosphorylated and translocates to the nucleus where it regulates cytokine/growth factor responsive genes. As part of IL-35, plays essential roles in maintaining the immune homeostasis of the liver microenvironment and also functions as an immune-suppressive cytokine. Mediates biological events through unconventional receptors composed of IL12RB2 and gp130/IL6ST heterodimers or homodimers. Signaling requires the transcription factors STAT1 and STAT4, which form a unique heterodimer that binds to distinct DNA sites. The sequence is that of Interleukin-12 subunit alpha (IL12A) from Macaca mulatta (Rhesus macaque).